Consider the following 537-residue polypeptide: Cytochrome P450 86A8 (537 aa).

A helical membrane pass occupies residues 3 to 23 (ISTALMILSAITAYFLWLTFI). Cys-458 lines the heme pocket.

The protein belongs to the cytochrome P450 family. The cofactor is heme. As to expression, expressed in leaves, stems, flowers and siliques. Expressed at low levels in roots.

It is found in the membrane. The catalysed reaction is an organic molecule + reduced [NADPH--hemoprotein reductase] + O2 = an alcohol + oxidized [NADPH--hemoprotein reductase] + H2O + H(+). Its function is as follows. Catalyzes the omega-hydroxylation of various fatty acids (FA). Acts on saturated and unsaturated fatty acids with chain lengths from C12 to C18. May be involved in the biosynthesis of cutin in the epidermis which prevents post-genital organ fusions. Hydroxylated FAs may be important for trichome differentiation, establishment of apical dominance and senescence. In Arabidopsis thaliana (Mouse-ear cress), this protein is Cytochrome P450 86A8 (CYP86A8).